The sequence spans 42 residues: Omega-theraphotoxin-Asp3a (42 aa).

3 disulfides stabilise this stretch: cysteine 1-cysteine 16, cysteine 8-cysteine 21, and cysteine 15-cysteine 30.

This sequence belongs to the neurotoxin 14 (magi-1) family. 08 (Ltx-4) subfamily. Expressed by the venom gland.

Its subcellular location is the secreted. Functionally, inhibits voltage-gated calcium channels (Cav) in rat cerebellar granule cells. This chain is Omega-theraphotoxin-Asp3a, found in Aphonopelma sp. (American tarantula).